Reading from the N-terminus, the 121-residue chain is Histone H2B (121 aa).

Residues 1–27 form a disordered region; the sequence is MAPKKAPAAAEKKVKKAPTTEKKNKKK. Alanine 2 is subject to N,N,N-trimethylalanine. N6-acetyllysine occurs at positions 5 and 41. Residue lysine 115 forms a Glycyl lysine isopeptide (Lys-Gly) (interchain with G-Cter in ubiquitin) linkage.

Belongs to the histone H2B family. The nucleosome is a histone octamer containing two molecules each of H2A, H2B, H3 and H4 assembled in one H3-H4 heterotetramer and two H2A-H2B heterodimers. The octamer wraps approximately 147 bp of DNA. In terms of processing, monoubiquitination of Lys-115 gives a specific tag for epigenetic transcriptional activation and is also prerequisite for histone H3 'Lys-4' and 'Lys-79' methylation. Post-translationally, acetylation occurs almost exclusively in the MAC.

It localises to the nucleus. Its subcellular location is the chromosome. Functionally, core component of nucleosome. Nucleosomes wrap and compact DNA into chromatin, limiting DNA accessibility to the cellular machineries which require DNA as a template. Histones thereby play a central role in transcription regulation, DNA repair, DNA replication and chromosomal stability. DNA accessibility is regulated via a complex set of post-translational modifications of histones, also called histone code, and nucleosome remodeling. The protein is Histone H2B of Tetrahymena pyriformis.